A 252-amino-acid polypeptide reads, in one-letter code: Imidazole glycerol phosphate synthase subunit HisF (252 aa).

Residues aspartate 11 and aspartate 130 contribute to the active site.

This sequence belongs to the HisA/HisF family. Heterodimer of HisH and HisF.

Its subcellular location is the cytoplasm. The enzyme catalyses 5-[(5-phospho-1-deoxy-D-ribulos-1-ylimino)methylamino]-1-(5-phospho-beta-D-ribosyl)imidazole-4-carboxamide + L-glutamine = D-erythro-1-(imidazol-4-yl)glycerol 3-phosphate + 5-amino-1-(5-phospho-beta-D-ribosyl)imidazole-4-carboxamide + L-glutamate + H(+). The protein operates within amino-acid biosynthesis; L-histidine biosynthesis; L-histidine from 5-phospho-alpha-D-ribose 1-diphosphate: step 5/9. Its function is as follows. IGPS catalyzes the conversion of PRFAR and glutamine to IGP, AICAR and glutamate. The HisF subunit catalyzes the cyclization activity that produces IGP and AICAR from PRFAR using the ammonia provided by the HisH subunit. This Lacticaseibacillus casei (strain BL23) (Lactobacillus casei) protein is Imidazole glycerol phosphate synthase subunit HisF.